The primary structure comprises 325 residues: Acetyl-coenzyme A carboxylase carboxyl transferase subunit beta (325 aa).

The region spanning 24–293 (LWIKCPDSGH…AEIEVVTPEP (270 aa)) is the CoA carboxyltransferase N-terminal domain.

Belongs to the AccD/PCCB family. In terms of assembly, acetyl-CoA carboxylase is a heterohexamer composed of biotin carboxyl carrier protein (AccB), biotin carboxylase (AccC) and two subunits each of ACCase subunit alpha (AccA) and ACCase subunit beta (AccD).

It localises to the cytoplasm. It catalyses the reaction N(6)-carboxybiotinyl-L-lysyl-[protein] + acetyl-CoA = N(6)-biotinyl-L-lysyl-[protein] + malonyl-CoA. It participates in lipid metabolism; malonyl-CoA biosynthesis; malonyl-CoA from acetyl-CoA: step 1/1. Its function is as follows. Component of the acetyl coenzyme A carboxylase (ACC) complex. Biotin carboxylase (BC) catalyzes the carboxylation of biotin on its carrier protein (BCCP) and then the CO(2) group is transferred by the transcarboxylase to acetyl-CoA to form malonyl-CoA. The sequence is that of Acetyl-coenzyme A carboxylase carboxyl transferase subunit beta from Rhodopseudomonas palustris (strain BisA53).